Here is a 556-residue protein sequence, read N- to C-terminus: 2-succinyl-5-enolpyruvyl-6-hydroxy-3-cyclohexene-1-carboxylate synthase (556 aa).

This sequence belongs to the TPP enzyme family. MenD subfamily. Homodimer. Mg(2+) serves as cofactor. It depends on Mn(2+) as a cofactor. Thiamine diphosphate is required as a cofactor.

The catalysed reaction is isochorismate + 2-oxoglutarate + H(+) = 5-enolpyruvoyl-6-hydroxy-2-succinyl-cyclohex-3-ene-1-carboxylate + CO2. It functions in the pathway quinol/quinone metabolism; 1,4-dihydroxy-2-naphthoate biosynthesis; 1,4-dihydroxy-2-naphthoate from chorismate: step 2/7. Its pathway is quinol/quinone metabolism; menaquinone biosynthesis. In terms of biological role, catalyzes the thiamine diphosphate-dependent decarboxylation of 2-oxoglutarate and the subsequent addition of the resulting succinic semialdehyde-thiamine pyrophosphate anion to isochorismate to yield 2-succinyl-5-enolpyruvyl-6-hydroxy-3-cyclohexene-1-carboxylate (SEPHCHC). The protein is 2-succinyl-5-enolpyruvyl-6-hydroxy-3-cyclohexene-1-carboxylate synthase of Escherichia coli O45:K1 (strain S88 / ExPEC).